We begin with the raw amino-acid sequence, 1396 residues long: ABC-type transporter cicA (1396 aa).

Residues 1-40 (MRLSSEAKIAESGGQPPTAGSRSETGSESTEAESADPKAQ) form a disordered region. Positions 18-29 (TAGSRSETGSES) are enriched in low complexity. 3 consecutive transmembrane segments (helical) span residues 142–162 (FLLG…APYL), 191–211 (GFVV…NQFL), and 300–320 (MFHI…LLLV). In terms of domain architecture, ABC transmembrane type-1 1 spans 143–466 (LLGGFCHLIS…LPLVLGQITD (324 aa)). A glycan (N-linked (GlcNAc...) asparagine) is linked at N321. The next 3 helical transmembrane spans lie at 324 to 344 (YSAL…TYAV), 409 to 429 (ILCV…ITYA), and 440 to 460 (IFSS…LPLV). A compositionally biased stretch (basic and acidic residues) spans 510-533 (AADKEAEKVEKKANPRRTEPKSEA). The segment at 510–543 (AADKEAEKVEKKANPRRTEPKSEAPTDSAESDEP) is disordered. An ABC transporter 1 domain is found at 525–751 (RRTEPKSEAP…NDLFKQLMST (227 aa)). 563 to 570 (GTVGSGKS) is an ATP binding site. N604 carries N-linked (GlcNAc...) asparagine glycosylation. Residues 751 to 787 (TASQDSKEDEEEATEVVEEEAEKQAQQEPTKPAAALM) are disordered. Residues 757 to 771 (KEDEEEATEVVEEEA) are compositionally biased toward acidic residues. Transmembrane regions (helical) follow at residues 816–836 (LAIL…NLWL) and 852–872 (YIGI…IFST). In terms of domain architecture, ABC transmembrane type-1 2 spans 816 to 1093 (LAILFLLAFA…TVRQLAEVEN (278 aa)). N-linked (GlcNAc...) asparagine glycosylation occurs at N880. 4 consecutive transmembrane segments (helical) span residues 930–947 (MYAI…LIIV), 951–970 (YFAI…SNYY), 1036–1056 (LSVR…VLVV), and 1065–1085 (SISG…QFTV). 3 N-linked (GlcNAc...) asparagine glycosylation sites follow: N1096, N1150, and N1154. In terms of domain architecture, ABC transporter 2 spans 1131-1380 (ITFDNVAMRY…EDGIFRAMCE (250 aa)). Residue 1165 to 1172 (GRTGAGKS) participates in ATP binding.

It belongs to the ABC transporter superfamily. ABCC family. Conjugate transporter (TC 3.A.1.208) subfamily.

It localises to the cell membrane. Functionally, ABC-type transporter; part of the gene cluster that mediates the biosynthesis of cichorine, a phytotoxin active against knapweed, corn, and soybeans. CicA is probably involved in the secretion of cichorine. This chain is ABC-type transporter cicA, found in Emericella nidulans (strain FGSC A4 / ATCC 38163 / CBS 112.46 / NRRL 194 / M139) (Aspergillus nidulans).